Consider the following 621-residue polypeptide: TOX high mobility group box family member 4 (621 aa).

2 disordered regions span residues 153-227 and 305-333; these read LGLS…QKPV and LDPAPPSQTPSPPPMATVDPASPAPASIE. A Phosphothreonine modification is found at Thr176. Phosphoserine occurs at positions 178, 181, and 182. The segment covering 183 to 193 has biased composition (basic and acidic residues); sequence LHEDGVEDFRR. Residues 208 to 218 show a composition bias toward basic residues; the sequence is KQKAPKKRKKK. The short motif at 213-218 is the Nuclear localization signal element; sequence KKRKKK. A DNA-binding region (HMG box) is located at residues 223–291; sequence PQKPVSAYAL…EYLKALAAYK (69 aa). Over residues 307-319 the composition is skewed to pro residues; it reads PAPPSQTPSPPPM. The residue at position 313 (Thr313) is a Phosphothreonine. At Ser315 the chain carries Phosphoserine. A compositionally biased stretch (low complexity) spans 320 to 333; the sequence is ATVDPASPAPASIE. Arg481 is modified (asymmetric dimethylarginine). The span at 510–525 shows a compositional bias: polar residues; that stretch reads PTVESSPERPMNNSPE. Residues 510 to 529 are disordered; it reads PTVESSPERPMNNSPEAHTV. A phosphoserine mark is found at Ser533, Ser550, Ser552, Ser560, Ser562, and Ser567.

In terms of assembly, component of the PNUTS-PP1 phosphatase complex, composed of PPP1R10/PNUTS, TOX4, WDR82 and PPP1CA or PPP1CB or PPP1CC. Interacts with PPP1R10/PNUTS. Interacts with FOXO1 and CREB1 (increased by cAMP); FOXO1 and CREB1 are required for full induction of TOX4-dependent activity and the interactions are inhibited by insulin. In terms of tissue distribution, expressed in liver (at protein level).

It is found in the nucleus. The protein resides in the chromosome. In liver, recruited to target gene promoters following treatment with dexamethasone and cAMP. Binding is decreased in presence of insulin. Transcription factor that modulates cell fate reprogramming from the somatic state to the pluripotent and neuronal fate. In liver, controls the expression of hormone-regulated gluconeogenic genes such as G6PC1 and PCK1. This regulation is independent of the insulin receptor activation. Also acts as a regulatory component of protein phosphatase 1 (PP1) complexes. Component of the PNUTS-PP1 protein phosphatase complex, a PP1 complex that regulates RNA polymerase II transcription pause-release. PNUTS-PP1 also plays a role in the control of chromatin structure and cell cycle progression during the transition from mitosis into interphase. The sequence is that of TOX high mobility group box family member 4 from Homo sapiens (Human).